A 145-amino-acid polypeptide reads, in one-letter code: Large ribosomal subunit protein uL16 (145 aa).

The protein belongs to the universal ribosomal protein uL16 family. Part of the 50S ribosomal subunit.

Its function is as follows. Binds 23S rRNA and is also seen to make contacts with the A and possibly P site tRNAs. This chain is Large ribosomal subunit protein uL16, found in Exiguobacterium sp. (strain ATCC BAA-1283 / AT1b).